The chain runs to 360 residues: Variable large protein 14 (360 aa).

An N-terminal signal peptide occupies residues 1–18; the sequence is MRKRISAIIMTLFMVLAS. Cys19 is lipidated: N-palmitoyl cysteine. Cys19 carries the S-diacylglycerol cysteine lipid modification.

Belongs to the variable large protein (Vlp) family. Beta subfamily.

It is found in the cell outer membrane. The Vlp and Vsp proteins are antigenically distinct proteins, only one vlp or vsp gene is transcriptionally active at any one time. Switching between these genes is a mechanism of host immune response evasion. The polypeptide is Variable large protein 14 (Borrelia hermsii).